A 387-amino-acid chain; its full sequence is L-aspartate:5-guanidino-3-methyl-2-oxopentanoate transaminase (387 aa).

K237 is subject to N6-(pyridoxal phosphate)lysine.

It belongs to the class-I pyridoxal-phosphate-dependent aminotransferase family. Pyridoxal 5'-phosphate is required as a cofactor.

The enzyme catalyses (3R)-5-guanidino-3-methyl-2-oxopentanoate + L-aspartate = (3R)-3-methyl-L-arginine + oxaloacetate. Its pathway is antibiotic biosynthesis. Aminotransferase involved in the formation of the rare amino acid 3-methylarginine (MeArg), which is used as a potent antibiotic against the closely related soybean pathogen P.syringae pv. glycinea. Probably catalyzes transamination from the donor L-aspartate to 5-guanidino-3-methyl-2-oxopentanoic acid, generating 3-methylarginine. The chain is L-aspartate:5-guanidino-3-methyl-2-oxopentanoate transaminase from Pseudomonas syringae pv. syringae.